A 113-amino-acid chain; its full sequence is T cell receptor alpha variable 12-2 (113 aa).

The signal sequence occupies residues 1–20; sequence MKSLRVLLVILWLQLSWVWS. Residues 23–113 enclose the Ig-like domain; sequence KEVEQNSGPL…DSATYLCAVN (91 aa). N43 carries an N-linked (GlcNAc...) asparagine glycan. C44 and C110 are joined by a disulfide.

In terms of assembly, alpha-beta TR is a heterodimer composed of an alpha and beta chain; disulfide-linked. The alpha-beta TR is associated with the transmembrane signaling CD3 coreceptor proteins to form the TR-CD3 (TcR or TCR). The assembly of alpha-beta TR heterodimers with CD3 occurs in the endoplasmic reticulum where a single alpha-beta TR heterodimer associates with one CD3D-CD3E heterodimer, one CD3G-CD3E heterodimer and one CD247 homodimer forming a stable octameric structure. CD3D-CD3E and CD3G-CD3E heterodimers preferentially associate with TR alpha and TR beta chains, respectively. The association of the CD247 homodimer is the last step of TcR assembly in the endoplasmic reticulum and is required for transport to the cell surface.

It localises to the cell membrane. Functionally, v region of the variable domain of T cell receptor (TR) alpha chain that participates in the antigen recognition. Alpha-beta T cell receptors are antigen specific receptors which are essential to the immune response and are present on the cell surface of T lymphocytes. Recognize peptide-major histocompatibility (MH) (pMH) complexes that are displayed by antigen presenting cells (APC), a prerequisite for efficient T cell adaptive immunity against pathogens. Binding of alpha-beta TR to pMH complex initiates TR-CD3 clustering on the cell surface and intracellular activation of LCK that phosphorylates the ITAM motifs of CD3G, CD3D, CD3E and CD247 enabling the recruitment of ZAP70. In turn ZAP70 phosphorylates LAT, which recruits numerous signaling molecules to form the LAT signalosome. The LAT signalosome propagates signal branching to three major signaling pathways, the calcium, the mitogen-activated protein kinase (MAPK) kinase and the nuclear factor NF-kappa-B (NF-kB) pathways, leading to the mobilization of transcription factors that are critical for gene expression and essential for T cell growth and differentiation. The T cell repertoire is generated in the thymus, by V-(D)-J rearrangement. This repertoire is then shaped by intrathymic selection events to generate a peripheral T cell pool of self-MH restricted, non-autoaggressive T cells. Post-thymic interaction of alpha-beta TR with the pMH complexes shapes TR structural and functional avidity. In Homo sapiens (Human), this protein is T cell receptor alpha variable 12-2.